The primary structure comprises 380 residues: Cytochrome b (380 aa).

4 consecutive transmembrane segments (helical) span residues 34–54 (YGSLLGLCLMTQILTGLFLAM), 78–99 (WLMRNIHANGASFFFICIYLHI), 114–134 (WNIGVILLLLVMATAFVGYVL), and 179–199 (FFTFHFLLPFLIAGTSMLHLL). Heme b is bound by residues H84 and H98. Heme b contacts are provided by H183 and H197. H202 provides a ligand contact to a ubiquinone. The next 4 membrane-spanning stretches (helical) occupy residues 227–247 (YKDTFGFMIMLAALALLSTTN), 289–309 (LGGVLALLFSIMILMLIPSLH), 321–341 (LSQLMFWSIIANTLVLTWIGG), and 348–368 (FILIGQISSALYFILFLVLLP).

This sequence belongs to the cytochrome b family. As to quaternary structure, the cytochrome bc1 complex contains 3 respiratory subunits (MT-CYB, CYC1 and UQCRFS1), 2 core proteins (UQCRC1 and UQCRC2) and probably 6 low-molecular weight proteins. Requires heme b as cofactor.

The protein localises to the mitochondrion inner membrane. In terms of biological role, component of the ubiquinol-cytochrome c reductase complex (complex III or cytochrome b-c1 complex) that is part of the mitochondrial respiratory chain. The b-c1 complex mediates electron transfer from ubiquinol to cytochrome c. Contributes to the generation of a proton gradient across the mitochondrial membrane that is then used for ATP synthesis. This chain is Cytochrome b (mt-cyb), found in Typhlonectes natans (Rubber eel).